Here is a 701-residue protein sequence, read N- to C-terminus: uncharacterized protein (701 aa).

This is an uncharacterized protein from Saccharomyces cerevisiae (strain ATCC 204508 / S288c) (Baker's yeast).